Consider the following 593-residue polypeptide: Glyoxylate carboligase (593 aa).

It belongs to the TPP enzyme family. Homotetramer. Mg(2+) serves as cofactor. Requires thiamine diphosphate as cofactor.

The catalysed reaction is 2 glyoxylate + H(+) = 2-hydroxy-3-oxopropanoate + CO2. The protein operates within organic acid metabolism; glycolate degradation; 3-phospho-D-glycerate from glycolate: step 2/4. Catalyzes the condensation of two molecules of glyoxylate to give 2-hydroxy-3-oxopropanoate (also termed tartronate semialdehyde). The sequence is that of Glyoxylate carboligase (gcl) from Escherichia coli O157:H7.